Consider the following 755-residue polypeptide: Sentrin-specific protease 5 (755 aa).

Residues 268 to 321 (VQKVTGDHQETRRENGEGGSCSPFPSPEPKDPSCRHQPYFPDMDSSAVVKGTNS) are disordered. Residues 272–283 (TGDHQETRRENG) are compositionally biased toward basic and acidic residues. The protease stretch occupies residues 567-724 (HMLDMDDLAT…VFVLQYCKCL (158 aa)). Catalysis depends on residues H646, D663, and C713.

The protein belongs to the peptidase C48 family. In terms of assembly, interacts with CCAR2.

It localises to the nucleus. Its subcellular location is the nucleolus. Its function is as follows. Protease that catalyzes two essential functions in the SUMO pathway: processing of full-length SUMO3 to its mature form and deconjugation of SUMO2 and SUMO3 from targeted proteins. Has weak proteolytic activity against full-length SUMO1 or SUMO1 conjugates. Required for cell division. The chain is Sentrin-specific protease 5 (SENP5) from Homo sapiens (Human).